The primary structure comprises 315 residues: Leukocidin-S subunit (315 aa).

The signal sequence occupies residues 1–29 (MLKNKILATTLSVSLLAPLANPLLENAKA).

Belongs to the aerolysin family. Leukocidin consists of two protein components: F and S.

Leukocidin causes cytotoxic changes in polymorphonuclear leukocytes. In Staphylococcus aureus, this protein is Leukocidin-S subunit (lukS).